The primary structure comprises 240 residues: Biosynthetic peptidoglycan transglycosylase (240 aa).

A helical membrane pass occupies residues 9 to 31; it reads FLNVVKWFAIASVLLVLLFRVVP.

Belongs to the glycosyltransferase 51 family.

It localises to the cell inner membrane. It carries out the reaction [GlcNAc-(1-&gt;4)-Mur2Ac(oyl-L-Ala-gamma-D-Glu-L-Lys-D-Ala-D-Ala)](n)-di-trans,octa-cis-undecaprenyl diphosphate + beta-D-GlcNAc-(1-&gt;4)-Mur2Ac(oyl-L-Ala-gamma-D-Glu-L-Lys-D-Ala-D-Ala)-di-trans,octa-cis-undecaprenyl diphosphate = [GlcNAc-(1-&gt;4)-Mur2Ac(oyl-L-Ala-gamma-D-Glu-L-Lys-D-Ala-D-Ala)](n+1)-di-trans,octa-cis-undecaprenyl diphosphate + di-trans,octa-cis-undecaprenyl diphosphate + H(+). It participates in cell wall biogenesis; peptidoglycan biosynthesis. Functionally, peptidoglycan polymerase that catalyzes glycan chain elongation from lipid-linked precursors. This is Biosynthetic peptidoglycan transglycosylase from Pseudomonas fluorescens (strain SBW25).